The primary structure comprises 87 residues: Large ribosomal subunit protein bL31B (87 aa).

This sequence belongs to the bacterial ribosomal protein bL31 family. Type B subfamily. Part of the 50S ribosomal subunit.

In Salinispora arenicola (strain CNS-205), this protein is Large ribosomal subunit protein bL31B.